The chain runs to 774 residues: DNA ligase 3 (774 aa).

Positions 1–25 (MPPKKRMKNGSSLKSTSKKGEKSRN) are disordered. Residue K433 is the N6-AMP-lysine intermediate of the active site.

Belongs to the ATP-dependent DNA ligase family.

Its subcellular location is the nucleus. The catalysed reaction is ATP + (deoxyribonucleotide)n-3'-hydroxyl + 5'-phospho-(deoxyribonucleotide)m = (deoxyribonucleotide)n+m + AMP + diphosphate.. This chain is DNA ligase 3 (adl1), found in Schizosaccharomyces pombe (strain 972 / ATCC 24843) (Fission yeast).